The primary structure comprises 167 residues: NAD(P)H-quinone oxidoreductase subunit I, chloroplastic (167 aa).

2 consecutive 4Fe-4S ferredoxin-type domains span residues 55–84 (GRIH…VDWK) and 95–124 (LNYS…MTEE). Residues cysteine 64, cysteine 67, cysteine 70, cysteine 74, cysteine 104, cysteine 107, cysteine 110, and cysteine 114 each contribute to the [4Fe-4S] cluster site.

This sequence belongs to the complex I 23 kDa subunit family. As to quaternary structure, NDH is composed of at least 16 different subunits, 5 of which are encoded in the nucleus. It depends on [4Fe-4S] cluster as a cofactor.

The protein localises to the plastid. It is found in the chloroplast thylakoid membrane. The catalysed reaction is a plastoquinone + NADH + (n+1) H(+)(in) = a plastoquinol + NAD(+) + n H(+)(out). The enzyme catalyses a plastoquinone + NADPH + (n+1) H(+)(in) = a plastoquinol + NADP(+) + n H(+)(out). NDH shuttles electrons from NAD(P)H:plastoquinone, via FMN and iron-sulfur (Fe-S) centers, to quinones in the photosynthetic chain and possibly in a chloroplast respiratory chain. The immediate electron acceptor for the enzyme in this species is believed to be plastoquinone. Couples the redox reaction to proton translocation, and thus conserves the redox energy in a proton gradient. This Aethionema cordifolium (Lebanon stonecress) protein is NAD(P)H-quinone oxidoreductase subunit I, chloroplastic.